Here is a 343-residue protein sequence, read N- to C-terminus: Ubiquitin thioesterase OTU1 (343 aa).

Residues 45–123 (RCKAKGGTHV…IVEEDQTRPK (79 aa)) form a UBX-like region. The region spanning 144 to 269 (LTRTAVPADN…GIHYDPLQRN (126 aa)) is the OTU domain. A cys-loop region spans residues 149 to 155 (VPADNSC). Asp152 is an active-site residue. The Nucleophile role is filled by Cys155. The interval 208 to 218 (IRRDDTWGGAI) is variable-loop. Residues 258 to 262 (YDGIH) are his-loop. Position 261 (Ile261) interacts with substrate. His262 is a catalytic residue. The interval 286–291 (DIVLVQ) is S2 site. The C2H2-type zinc finger occupies 313-337 (LRCMLCQKGLTGQAEARDHARETGH). Residue His337 is part of the active site.

As to quaternary structure, interacts with VCP; the interaction is direct. Interacts with FAF2/UBXD8. Interacts with DERL1; however interaction is dependent on the UBAX-like region, suggesting that it may be indirect. Interacts with PLAA, UBXN6 and VCP; may form a complex involved in macroautophagy.

It is found in the cytoplasm. The enzyme catalyses Thiol-dependent hydrolysis of ester, thioester, amide, peptide and isopeptide bonds formed by the C-terminal Gly of ubiquitin (a 76-residue protein attached to proteins as an intracellular targeting signal).. In terms of biological role, hydrolase that can remove conjugated ubiquitin from proteins and participates in endoplasmic reticulum-associated degradation (ERAD) for misfolded lumenal proteins. May act by triming the ubiquitin chain on the associated substrate to facilitate their threading through the VCP/p97 pore. Ubiquitin moieties on substrates may present a steric impediment to the threading process when the substrate is transferred to the VCP pore and threaded through VCP's axial channel. Mediates deubiquitination of 'Lys-27'-, 'Lys-29'- and 'Lys-33'-linked polyubiquitin chains. Also able to hydrolyze 'Lys-11'-linked ubiquitin chains. Cleaves both polyubiquitin and di-ubiquitin. May play a role in macroautophagy, regulating for instance the clearance of damaged lysosomes. May recruit PLAA, UBXN6 and VCP to damaged lysosome membranes decorated with K48-linked ubiquitin chains and remove these chains allowing autophagosome formation. This chain is Ubiquitin thioesterase OTU1 (Yod1), found in Rattus norvegicus (Rat).